We begin with the raw amino-acid sequence, 520 residues long: Transactivator/viroplasmin protein (520 aa).

The disordered stretch occupies residues 487 to 520; that stretch reads KDASADSGPKDGPPPTRSIVEKEDVPTTSSKQVD.

This sequence belongs to the caulimoviridae viroplasmin family.

It is found in the host cytoplasm. In terms of biological role, enhances the ribosomal termination-reinitiation event leading to the translation of major open reading frames on the polycistronic viral RNAs. This is Transactivator/viroplasmin protein from Arabidopsis thaliana (Mouse-ear cress).